Reading from the N-terminus, the 136-residue chain is DNA-directed RNA polymerase subunit omega (136 aa).

The interval 79–107 (EPEAETVPLLSSSPAAAAVAPQSSSDDAA) is disordered. The segment covering 89–107 (SSSPAAAAVAPQSSSDDAA) has biased composition (low complexity).

It belongs to the RNA polymerase subunit omega family. As to quaternary structure, the RNAP catalytic core consists of 2 alpha, 1 beta, 1 beta' and 1 omega subunit. When a sigma factor is associated with the core the holoenzyme is formed, which can initiate transcription.

It catalyses the reaction RNA(n) + a ribonucleoside 5'-triphosphate = RNA(n+1) + diphosphate. Its function is as follows. Promotes RNA polymerase assembly. Latches the N- and C-terminal regions of the beta' subunit thereby facilitating its interaction with the beta and alpha subunits. The sequence is that of DNA-directed RNA polymerase subunit omega from Methylobacterium radiotolerans (strain ATCC 27329 / DSM 1819 / JCM 2831 / NBRC 15690 / NCIMB 10815 / 0-1).